The chain runs to 417 residues: MRSLLLLSAFCLLEAALAAEVKKPAAAAAPGTAEKLSPKAATLAERSAGLAFSLYQAMAKDQAVENILVSPVVVASSLGLVSLGGKATTASQAKAVLSAEQLRDEEVHAGLGELLRSLSNSTARNVTWKLGSRLYGPSSVSFADDFVRTASSTTTASTPRSTSATSAALQSINEWAAQTTDGKLPEVTKDVERTDGALLVNAMFFKPHWDEKFHHKMVDNRGFMVTRSYTVGVMMMHRTGLYNYYDDEKEKLQIVEMPLAHKLSSLIILMPHHVEPLERLEKLLTKEQLKIWMGKMQKKAVAISLPKGVVEVTHDLQKHLAGLGLTEAIDKNKADLSRMSGKKDLYLASVFHATAFELDTDGNPFDQDIYGREELRSPKLFYADHPFIFLVRDTQSGSLLFIGRLVRPKGDKMRDEL.

A signal peptide spans M1–A18. At K94 the chain carries N6-succinyllysine. 2 N-linked (GlcNAc...) asparagine glycosylation sites follow: N120 and N125. S141 bears the Phosphoserine mark. N6-acetyllysine is present on K206. The residue at position 295 (K295) is an N6-succinyllysine. At K318 the chain carries N6-acetyllysine. The short motif at R414–L417 is the Prevents secretion from ER element.

Belongs to the serpin family.

It localises to the endoplasmic reticulum lumen. In terms of biological role, binds specifically to collagen. Could be involved as a chaperone in the biosynthetic pathway of collagen. The polypeptide is Serpin H1 (SERPINH1) (Pongo abelii (Sumatran orangutan)).